We begin with the raw amino-acid sequence, 491 residues long: Probable diguanylate cyclase CdgI (491 aa).

The Cytoplasmic portion of the chain corresponds to 1 to 54 (MIQSTRISMGLFFKYFLSLTKIDPGQNYISLPSIKSSTHIALLFMVSMGTQKLK). Residues 55–75 (AQSFFIFSLLLTLILFCITTL) form a helical membrane-spanning segment. The Periplasmic portion of the chain corresponds to 76–89 (YNENTNVKLIPQMN). A helical membrane pass occupies residues 90 to 110 (YLMVVVALFFLNAVIFLFMLM). Topologically, residues 111–121 (KYFTNKQILPT) are cytoplasmic. A helical transmembrane segment spans residues 122–142 (LILSLAFLSGLIYLVETIVII). The Periplasmic segment spans residues 143–158 (HKPINGSTLIQTKSND). The chain crosses the membrane as a helical span at residues 159–179 (VSIFYIFRQLSFICLTSLALF). At 180–193 (CYGKDNILDNNKKK) the chain is on the cytoplasmic side. Residues 194–214 (TGILLLALIPFLVFPLLAHNL) traverse the membrane as a helical segment. Residues 215–236 (SSYNADYSLYVVDYCPDNHTAT) are Periplasmic-facing. A helical membrane pass occupies residues 237-257 (WGINYTKILVCLWAFLLFFII). Topologically, residues 258–265 (MRTRLASE) are cytoplasmic. Residues 266–286 (LWPLIALLCLASLCCNLLLLT) form a helical membrane-spanning segment. Over 287–293 (LDEYNYT) the chain is Periplasmic. Residues 294–314 (IWYISRGIEVSSKLFVVSFLI) traverse the membrane as a helical segment. Over 315–491 (YNIFQELQLS…GGNKVIIHHI (177 aa)) the chain is Cytoplasmic. The GGDEF domain occupies 356 to 491 (KDFCVMLVDI…GGNKVIIHHI (136 aa)). Residues D364 and I365 each contribute to the Mg(2+) site. 3 residues coordinate substrate: N372, H377, and D381. A Mg(2+)-binding site is contributed by E407. E407 (proton acceptor) is an active-site residue. R427 contributes to the substrate binding site.

Homodimer. Requires Mg(2+) as cofactor.

The protein localises to the cell inner membrane. It carries out the reaction 2 GTP = 3',3'-c-di-GMP + 2 diphosphate. It functions in the pathway purine metabolism; 3',5'-cyclic di-GMP biosynthesis. Catalyzes the synthesis of cyclic-di-GMP (c-di-GMP) via the condensation of 2 GTP molecules. The chain is Probable diguanylate cyclase CdgI from Escherichia coli (strain K12).